Reading from the N-terminus, the 384-residue chain is WAT1-related protein At4g08290 (384 aa).

Transmembrane regions (helical) follow at residues 15–35 (LLMIFLQFGAAGTYIVIMATL), 43–63 (VVIVYRNLVAALVLAPFALIF), 73–93 (LSVLWKIMALGFLEPVLDQGF), 104–124 (TYTSAIMNILPSVTFIIAWIL), 140–160 (IIGTLVGLGGALVMTLYKGPL), 186–206 (WVVGTLLILLGCVAWSGFYVL), 219–239 (SLSALICLAGAVQSFAVALVV), 255–275 (FAPLYTGIVSSGITYYVQGMV), 282–302 (VFVTAFNPLCMILVALIASFI), and 307–327 (IHFGCVIGGAVIAAGLYMVVW). EamA domains are found at residues 25-154 (AGTY…LVMT) and 198-326 (VAWS…YMVV).

It belongs to the drug/metabolite transporter (DMT) superfamily. Plant drug/metabolite exporter (P-DME) (TC 2.A.7.4) family.

The protein resides in the membrane. The protein is WAT1-related protein At4g08290 of Arabidopsis thaliana (Mouse-ear cress).